Consider the following 50-residue polypeptide: Photosystem II reaction center protein K (50 aa).

A propeptide spanning residues 1–13 (MLNLNFTNITVMG) is cleaved from the precursor. A helical transmembrane segment spans residues 25–45 (IVDILPIIPILFFLLAFVWQA).

It belongs to the PsbK family. As to quaternary structure, PSII is composed of 1 copy each of membrane proteins PsbA, PsbB, PsbC, PsbD, PsbE, PsbF, PsbH, PsbI, PsbJ, PsbK, PsbL, PsbM, PsbT, PsbY, PsbZ, Psb30/Ycf12, at least 3 peripheral proteins of the oxygen-evolving complex and a large number of cofactors. It forms dimeric complexes.

The protein localises to the plastid. Its subcellular location is the chloroplast thylakoid membrane. One of the components of the core complex of photosystem II (PSII). PSII is a light-driven water:plastoquinone oxidoreductase that uses light energy to abstract electrons from H(2)O, generating O(2) and a proton gradient subsequently used for ATP formation. It consists of a core antenna complex that captures photons, and an electron transfer chain that converts photonic excitation into a charge separation. The sequence is that of Photosystem II reaction center protein K from Euglena myxocylindracea.